The following is a 240-amino-acid chain: Uridylate kinase (240 aa).

K13–G16 lines the ATP pocket. Position 55 (G55) interacts with UMP. ATP is bound by residues G56 and R60. Residues D75 and T136–T143 contribute to the UMP site. Residues T163, Q164, Y169, and D172 each coordinate ATP.

It belongs to the UMP kinase family. Homohexamer.

It is found in the cytoplasm. The catalysed reaction is UMP + ATP = UDP + ADP. It participates in pyrimidine metabolism; CTP biosynthesis via de novo pathway; UDP from UMP (UMPK route): step 1/1. With respect to regulation, inhibited by UTP. Catalyzes the reversible phosphorylation of UMP to UDP. This is Uridylate kinase from Mesorhizobium japonicum (strain LMG 29417 / CECT 9101 / MAFF 303099) (Mesorhizobium loti (strain MAFF 303099)).